Here is a 183-residue protein sequence, read N- to C-terminus: TATA-box-binding protein (183 aa).

A run of 2 repeats spans residues 7 to 83 (IENV…ARTL) and 99 to 177 (VQNI…RQQL).

This sequence belongs to the TBP family.

In terms of biological role, general factor that plays a role in the activation of archaeal genes transcribed by RNA polymerase. Binds specifically to the TATA box promoter element which lies close to the position of transcription initiation. The sequence is that of TATA-box-binding protein from Methanothrix thermoacetophila (strain DSM 6194 / JCM 14653 / NBRC 101360 / PT) (Methanosaeta thermophila).